We begin with the raw amino-acid sequence, 283 residues long: uncharacterized protein (283 aa).

The next 5 membrane-spanning stretches (helical) occupy residues 8–28 (LILSIVGNILLGLIKIIIGYV), 38–58 (GIHSLSDVITSIIGIIGVKIA), 73–93 (FECLFSFFIGLALFFTAYEIG), 100–120 (IIYGEVIEVNAIMVGVAILSI), and 175–195 (AIAGIIVALMIAKVAFDICLT).

The protein belongs to the cation diffusion facilitator (CDF) transporter (TC 2.A.4) family.

The protein localises to the cell membrane. This is an uncharacterized protein from Methanocaldococcus jannaschii (strain ATCC 43067 / DSM 2661 / JAL-1 / JCM 10045 / NBRC 100440) (Methanococcus jannaschii).